A 291-amino-acid polypeptide reads, in one-letter code: NAD kinase (291 aa).

Aspartate 55 serves as the catalytic Proton acceptor. Residues 55–56, arginine 60, 130–131, aspartate 160, and 171–176 contribute to the NAD(+) site; these read DG, NE, and TAYAFS.

Belongs to the NAD kinase family. A divalent metal cation is required as a cofactor.

It is found in the cytoplasm. The enzyme catalyses NAD(+) + ATP = ADP + NADP(+) + H(+). In terms of biological role, involved in the regulation of the intracellular balance of NAD and NADP, and is a key enzyme in the biosynthesis of NADP. Catalyzes specifically the phosphorylation on 2'-hydroxyl of the adenosine moiety of NAD to yield NADP. The sequence is that of NAD kinase from Corynebacterium glutamicum (strain ATCC 13032 / DSM 20300 / JCM 1318 / BCRC 11384 / CCUG 27702 / LMG 3730 / NBRC 12168 / NCIMB 10025 / NRRL B-2784 / 534).